The chain runs to 484 residues: MGSNDLINEAYDDSEVVGEERESKSAWMKRWYQLLTSPLDLQLVINEKLEMINWDAYAKSLAKPLGNFLTILFFIIRLLQDNLIKPNYYKLNVKSGAFDLSKSNKLKEFDYLWEISSSFQNNNQFYAFQSWYFVTLRFLNNLFRFTIFILLSLNLYVSCKFMFGYFKTYNLFHLKKEFNSPNLTKHNLKDLSKEYYEDIYKQSLWSMLKHFFRGSRDDGPHVNQNEDEIFFQLRKWIPTNFMINLFVSFSPTAIVFLSFSDVSFTSAIAIVFHQYILDYIITKRFQRSVDDDLILSSAALQEYEDKHIMARINQCSNIDTLSSAMGTRSKTPRIFTTHSLCGEEIREVYNYEKREFEALPKMTESVPGSRETRIKDYGGISQVSDHQSHPIGFHYSPRMSPYYRDKVLDNNLAQSSSNENLEKGGAYLPNQDQNRPSKSLSPLRKTPLSARQKRFEGSEFNVLNKNDINSILRSPKKKKNYHKR.

Residue Ser-3 is modified to Phosphoserine. Helical transmembrane passes span 145-165 (FTIFILLSLNLYVSCKFMFGY) and 252-272 (TAIVFLSFSDVSFTSAIAIVF). The interval 416–457 (SSNENLEKGGAYLPNQDQNRPSKSLSPLRKTPLSARQKRFEG) is disordered. Ser-417 is subject to Phosphoserine. Positions 430–440 (NQDQNRPSKSL) are enriched in polar residues. Phosphoserine is present on Ser-474.

Belongs to the NUR1 family. In terms of assembly, interacts with CSM1.

Its subcellular location is the nucleus membrane. Its function is as follows. Member of a perinuclear network that controls recombination at multiple loci to maintain genome stability. Required for rDNA repeat stability. In Saccharomyces cerevisiae (strain ATCC 204508 / S288c) (Baker's yeast), this protein is Nuclear rim protein 1 (NUR1).